We begin with the raw amino-acid sequence, 385 residues long: Glucans biosynthesis protein C (385 aa).

10 helical membrane passes run 17 to 37, 60 to 80, 91 to 111, 137 to 157, 173 to 193, 212 to 232, 239 to 259, 274 to 294, 311 to 331, and 338 to 358; these read AWLM…SHTW, MQVF…RYPL, VGIP…IMLQ, ISHL…VWIF, KFSM…YAVI, FIVM…LAFI, LFTT…VAYL, TESV…FSFG, ASLF…AYIT, and WLGF…LYEI.

Belongs to the acyltransferase 3 family. OpgC subfamily.

It is found in the cell membrane. It participates in glycan metabolism; osmoregulated periplasmic glucan (OPG) biosynthesis. Functionally, necessary for the succinyl substitution of periplasmic glucans. Could catalyze the transfer of succinyl residues from the cytoplasmic side of the membrane to the nascent glucan backbones on the periplasmic side of the membrane. The sequence is that of Glucans biosynthesis protein C from Shigella sonnei (strain Ss046).